Consider the following 433-residue polypeptide: Histidine--tRNA ligase (433 aa).

Belongs to the class-II aminoacyl-tRNA synthetase family. In terms of assembly, homodimer.

Its subcellular location is the cytoplasm. The enzyme catalyses tRNA(His) + L-histidine + ATP = L-histidyl-tRNA(His) + AMP + diphosphate + H(+). The protein is Histidine--tRNA ligase of Blochmanniella floridana.